We begin with the raw amino-acid sequence, 53 residues long: Large ribosomal subunit protein bL32c (53 aa).

Belongs to the bacterial ribosomal protein bL32 family.

The protein localises to the plastid. The protein resides in the chloroplast. This chain is Large ribosomal subunit protein bL32c (rpl32), found in Guillardia theta (Cryptophyte).